A 283-amino-acid polypeptide reads, in one-letter code: uncharacterized protein (283 aa).

The signal sequence occupies residues 1–23 (MFAFASFAISAIFFLCSFSYVSS).

It is found in the secreted. This is an uncharacterized protein from Schizosaccharomyces pombe (strain 972 / ATCC 24843) (Fission yeast).